We begin with the raw amino-acid sequence, 706 residues long: Glutamine-dependent NAD(+) synthetase (706 aa).

Residues 5–275 (VTVATCALNQ…VEVLTATLDL (271 aa)) form the CN hydrolase domain. Residue Glu45 is the Proton acceptor; for glutaminase activity of the active site. Lys114 functions as the For glutaminase activity in the catalytic mechanism. The Nucleophile; for glutaminase activity role is filled by Cys175. The interval 325–706 (YHSPEEEISL…AEPQSLDGVD (382 aa)) is ligase. ATP is bound at residue 355–362 (PLSGGVDS). Ser357 is a catalytic residue.

In the C-terminal section; belongs to the NAD synthetase family. As to quaternary structure, homohexamer.

It carries out the reaction deamido-NAD(+) + L-glutamine + ATP + H2O = L-glutamate + AMP + diphosphate + NAD(+) + H(+). The protein operates within cofactor biosynthesis; NAD(+) biosynthesis; NAD(+) from deamido-NAD(+) (L-Gln route): step 1/1. In terms of biological role, catalyzes the final step of the nicotinamide adenine dinucleotide (NAD) de novo synthesis pathway, the ATP-dependent amidation of deamido-NAD using L-glutamine as a nitrogen source. This chain is Glutamine-dependent NAD(+) synthetase (NADSYN1), found in Homo sapiens (Human).